Consider the following 218-residue polypeptide: UPF0502 protein VS_II0353 (218 aa).

This sequence belongs to the UPF0502 family.

The protein is UPF0502 protein VS_II0353 of Vibrio atlanticus (strain LGP32) (Vibrio splendidus (strain Mel32)).